We begin with the raw amino-acid sequence, 160 residues long: Endoribonuclease YbeY (160 aa).

Zn(2+) contacts are provided by H112, H116, and H122. A disordered region spans residues 141–160 (ELGHPDPYACDDEEPPSKEK).

The protein belongs to the endoribonuclease YbeY family. Zn(2+) serves as cofactor.

It is found in the cytoplasm. Single strand-specific metallo-endoribonuclease involved in late-stage 70S ribosome quality control and in maturation of the 3' terminus of the 16S rRNA. The protein is Endoribonuclease YbeY of Pseudomonas paraeruginosa (strain DSM 24068 / PA7) (Pseudomonas aeruginosa (strain PA7)).